The chain runs to 151 residues: UPF0756 membrane protein Hore_21770 (151 aa).

Transmembrane regions (helical) follow at residues Leu7–Leu29, Ile49–Val69, Thr84–Leu104, Phe110–Val130, and Gly131–Gly151.

This sequence belongs to the UPF0756 family.

Its subcellular location is the cell membrane. The sequence is that of UPF0756 membrane protein Hore_21770 from Halothermothrix orenii (strain H 168 / OCM 544 / DSM 9562).